Reading from the N-terminus, the 156-residue chain is Ribosomal RNA large subunit methyltransferase H (156 aa).

S-adenosyl-L-methionine-binding positions include leucine 73, glycine 104, and 123–128; that span reads VSSLTL.

This sequence belongs to the RNA methyltransferase RlmH family. As to quaternary structure, homodimer.

The protein localises to the cytoplasm. The enzyme catalyses pseudouridine(1915) in 23S rRNA + S-adenosyl-L-methionine = N(3)-methylpseudouridine(1915) in 23S rRNA + S-adenosyl-L-homocysteine + H(+). In terms of biological role, specifically methylates the pseudouridine at position 1915 (m3Psi1915) in 23S rRNA. This is Ribosomal RNA large subunit methyltransferase H from Burkholderia mallei (strain NCTC 10247).